Here is a 303-residue protein sequence, read N- to C-terminus: Aspartate carbamoyltransferase catalytic subunit (303 aa).

Carbamoyl phosphate is bound by residues Arg49 and Thr50. Lys77 provides a ligand contact to L-aspartate. Carbamoyl phosphate-binding residues include Arg99, His126, and Gln129. L-aspartate-binding residues include Arg159 and Arg211. 2 residues coordinate carbamoyl phosphate: Ser252 and Pro253.

The protein belongs to the aspartate/ornithine carbamoyltransferase superfamily. ATCase family. In terms of assembly, heterododecamer (2C3:3R2) of six catalytic PyrB chains organized as two trimers (C3), and six regulatory PyrI chains organized as three dimers (R2).

The catalysed reaction is carbamoyl phosphate + L-aspartate = N-carbamoyl-L-aspartate + phosphate + H(+). The protein operates within pyrimidine metabolism; UMP biosynthesis via de novo pathway; (S)-dihydroorotate from bicarbonate: step 2/3. Its function is as follows. Catalyzes the condensation of carbamoyl phosphate and aspartate to form carbamoyl aspartate and inorganic phosphate, the committed step in the de novo pyrimidine nucleotide biosynthesis pathway. This is Aspartate carbamoyltransferase catalytic subunit from Listeria monocytogenes serovar 1/2a (strain ATCC BAA-679 / EGD-e).